A 312-amino-acid chain; its full sequence is Ribosomal RNA small subunit methyltransferase H (312 aa).

Residues 35–37 (GGH), Asp-55, Phe-79, Asp-101, and Gln-108 each bind S-adenosyl-L-methionine.

It belongs to the methyltransferase superfamily. RsmH family.

It localises to the cytoplasm. The catalysed reaction is cytidine(1402) in 16S rRNA + S-adenosyl-L-methionine = N(4)-methylcytidine(1402) in 16S rRNA + S-adenosyl-L-homocysteine + H(+). Functionally, specifically methylates the N4 position of cytidine in position 1402 (C1402) of 16S rRNA. The sequence is that of Ribosomal RNA small subunit methyltransferase H from Buchnera aphidicola subsp. Schizaphis graminum (strain Sg).